The primary structure comprises 123 residues: Large ribosomal subunit protein uL14c (123 aa).

The protein belongs to the universal ribosomal protein uL14 family. In terms of assembly, part of the 50S ribosomal subunit.

It localises to the plastid. The protein resides in the chloroplast. Its function is as follows. Binds to 23S rRNA. The polypeptide is Large ribosomal subunit protein uL14c (Oryza nivara (Indian wild rice)).